The chain runs to 402 residues: MAARNCTKALRPLARQLATPAVQRRTFVAAASAVRASVAVKAVAAPARQQVRGVKTMDFAGHKEEVHERADWPAEKLLDYFKNDTLALIGYGSQGHGQGLNLRDNGLNVIVGVRKNGKSWEDAIQDGWVPGKNLFDVDEAISRGTIVMNLLSDAAQSETWPHIKPQITKGKTLYFSHGFSPVFKDLTKVEVPTDVDVILVAPKGSGRTVRSLFREGRGINSSFAVYQDVTGKAKEKAVALGVAVGSGYLYETTFEKEVYSDLYGERGCLMGGIHGMFLAQYEVLRERGHSPSEAFNETVEEATQSLYPLIGAHGMDWMFDACSTTARRGAIDWTPKFKDALKPVFNNLYDSVKNGDETKRSLEYNSQPDYRERYEAELDEIRNLEIWRAGKAVRSLRPENQK.

The N-terminal 26 residues, 1-26, are a transit peptide targeting the mitochondrion; the sequence is MAARNCTKALRPLARQLATPAVQRRT. Residues 63–252 form the KARI N-terminal Rossmann domain; the sequence is KEEVHERADW…AVGSGYLYET (190 aa). NADP(+) is bound by residues 90–99, 114–119, and 152–156; these read GYGSQGHGQG, RKNGKS, and SDAAQ. The active site involves His177. The KARI C-terminal knotted domain maps to 253–400; it reads TFEKEVYSDL…KAVRSLRPEN (148 aa). Residues Asp261, Glu265, Glu297, and Glu301 each contribute to the Mg(2+) site. Ser323 lines the substrate pocket.

The protein belongs to the ketol-acid reductoisomerase family. Mg(2+) is required as a cofactor.

It is found in the mitochondrion. It carries out the reaction (2R)-2,3-dihydroxy-3-methylbutanoate + NADP(+) = (2S)-2-acetolactate + NADPH + H(+). It catalyses the reaction (2R,3R)-2,3-dihydroxy-3-methylpentanoate + NADP(+) = (S)-2-ethyl-2-hydroxy-3-oxobutanoate + NADPH + H(+). The protein operates within amino-acid biosynthesis; L-isoleucine biosynthesis; L-isoleucine from 2-oxobutanoate: step 2/4. It participates in amino-acid biosynthesis; L-valine biosynthesis; L-valine from pyruvate: step 2/4. The sequence is that of Ketol-acid reductoisomerase, mitochondrial (ilv-2) from Neurospora crassa (strain ATCC 24698 / 74-OR23-1A / CBS 708.71 / DSM 1257 / FGSC 987).